A 284-amino-acid chain; its full sequence is 4-hydroxy-3-methylbut-2-enyl diphosphate reductase (284 aa).

Cysteine 12 is a [4Fe-4S] cluster binding site. The (2E)-4-hydroxy-3-methylbut-2-enyl diphosphate site is built by histidine 40 and histidine 72. 2 residues coordinate dimethylallyl diphosphate: histidine 40 and histidine 72. 2 residues coordinate isopentenyl diphosphate: histidine 40 and histidine 72. Cysteine 94 contributes to the [4Fe-4S] cluster binding site. Histidine 122 lines the (2E)-4-hydroxy-3-methylbut-2-enyl diphosphate pocket. Residue histidine 122 coordinates dimethylallyl diphosphate. Histidine 122 is an isopentenyl diphosphate binding site. Glutamate 124 functions as the Proton donor in the catalytic mechanism. Threonine 161 serves as a coordination point for (2E)-4-hydroxy-3-methylbut-2-enyl diphosphate. Cysteine 193 contacts [4Fe-4S] cluster. (2E)-4-hydroxy-3-methylbut-2-enyl diphosphate-binding residues include serine 221, asparagine 223, and serine 264. The dimethylallyl diphosphate site is built by serine 221, asparagine 223, and serine 264. Isopentenyl diphosphate is bound by residues serine 221, asparagine 223, and serine 264.

Belongs to the IspH family. Requires [4Fe-4S] cluster as cofactor.

It carries out the reaction isopentenyl diphosphate + 2 oxidized [2Fe-2S]-[ferredoxin] + H2O = (2E)-4-hydroxy-3-methylbut-2-enyl diphosphate + 2 reduced [2Fe-2S]-[ferredoxin] + 2 H(+). The catalysed reaction is dimethylallyl diphosphate + 2 oxidized [2Fe-2S]-[ferredoxin] + H2O = (2E)-4-hydroxy-3-methylbut-2-enyl diphosphate + 2 reduced [2Fe-2S]-[ferredoxin] + 2 H(+). It functions in the pathway isoprenoid biosynthesis; dimethylallyl diphosphate biosynthesis; dimethylallyl diphosphate from (2E)-4-hydroxy-3-methylbutenyl diphosphate: step 1/1. Its pathway is isoprenoid biosynthesis; isopentenyl diphosphate biosynthesis via DXP pathway; isopentenyl diphosphate from 1-deoxy-D-xylulose 5-phosphate: step 6/6. Functionally, catalyzes the conversion of 1-hydroxy-2-methyl-2-(E)-butenyl 4-diphosphate (HMBPP) into a mixture of isopentenyl diphosphate (IPP) and dimethylallyl diphosphate (DMAPP). Acts in the terminal step of the DOXP/MEP pathway for isoprenoid precursor biosynthesis. The polypeptide is 4-hydroxy-3-methylbut-2-enyl diphosphate reductase (Dehalococcoides mccartyi (strain ATCC BAA-2266 / KCTC 15142 / 195) (Dehalococcoides ethenogenes (strain 195))).